Reading from the N-terminus, the 240-residue chain is Uridylate kinase (240 aa).

13–16 (KLSG) is an ATP binding site. An involved in allosteric activation by GTP region spans residues 21 to 26 (GEKGFG). Glycine 55 lines the UMP pocket. Residues glycine 56 and arginine 60 each contribute to the ATP site. Residues aspartate 75 and 136-143 (IGNPYFST) contribute to the UMP site. Positions 164, 170, and 173 each coordinate ATP.

Belongs to the UMP kinase family. As to quaternary structure, homohexamer.

The protein resides in the cytoplasm. The enzyme catalyses UMP + ATP = UDP + ADP. Its pathway is pyrimidine metabolism; CTP biosynthesis via de novo pathway; UDP from UMP (UMPK route): step 1/1. Its activity is regulated as follows. Allosterically activated by GTP. Inhibited by UTP. Functionally, catalyzes the reversible phosphorylation of UMP to UDP. This is Uridylate kinase from Staphylococcus aureus (strain USA300).